Reading from the N-terminus, the 262-residue chain is MAVNTAEYIGHHLSFLSSGDGFWAVHLDTLFFSLVAGVLFLVVFSRVAKNATTGVPGKLQCLVEMVVEWVDGLVKDNFHGPRHMIAPLALTIFCWVFIMNAIDLVPVDFLPQLANMFGIHYLRAVPTADISATLGMSICVFGLILFYTVKSKGFNGLAKEYTLHPFNHWAFIPVNFILETVTLLAKPISLAFRLFGNMYAGELIFILIAVMYMADNFALQALGIPLHLVWAIFHILVITLQAFIFMMLTIVYLSIAYNKADH.

A run of 5 helical transmembrane segments spans residues 24-44 (AVHL…LVVF), 85-105 (IAPL…IDLV), 129-149 (DISA…FYTV), 194-214 (LFGN…MYMA), and 228-248 (LVWA…FMML).

It belongs to the ATPase A chain family. In terms of assembly, F-type ATPases have 2 components, CF(1) - the catalytic core - and CF(0) - the membrane proton channel. CF(1) has five subunits: alpha(3), beta(3), gamma(1), delta(1), epsilon(1). CF(0) has three main subunits: a(1), b(2) and c(9-12). The alpha and beta chains form an alternating ring which encloses part of the gamma chain. CF(1) is attached to CF(0) by a central stalk formed by the gamma and epsilon chains, while a peripheral stalk is formed by the delta and b chains.

The protein localises to the cell inner membrane. Its function is as follows. Key component of the proton channel; it plays a direct role in the translocation of protons across the membrane. The sequence is that of ATP synthase subunit a from Haemophilus ducreyi (strain 35000HP / ATCC 700724).